The chain runs to 561 residues: Glutamate--tRNA ligase (561 aa).

The short motif at 107-117 (PNPSGPLHLGH) is the 'HIGH' region element.

Belongs to the class-I aminoacyl-tRNA synthetase family. Glutamate--tRNA ligase type 2 subfamily.

It localises to the cytoplasm. The catalysed reaction is tRNA(Glu) + L-glutamate + ATP = L-glutamyl-tRNA(Glu) + AMP + diphosphate. Catalyzes the attachment of glutamate to tRNA(Glu) in a two-step reaction: glutamate is first activated by ATP to form Glu-AMP and then transferred to the acceptor end of tRNA(Glu). This chain is Glutamate--tRNA ligase, found in Methanoculleus marisnigri (strain ATCC 35101 / DSM 1498 / JR1).